The sequence spans 118 residues: Small ribosomal subunit protein uS13 (118 aa).

The segment at 92 to 118 (RRSLPVRGQRTKTNARTRKGPRKPIKK) is disordered.

The protein belongs to the universal ribosomal protein uS13 family. Part of the 30S ribosomal subunit. Forms a loose heterodimer with protein S19. Forms two bridges to the 50S subunit in the 70S ribosome.

Functionally, located at the top of the head of the 30S subunit, it contacts several helices of the 16S rRNA. In the 70S ribosome it contacts the 23S rRNA (bridge B1a) and protein L5 of the 50S subunit (bridge B1b), connecting the 2 subunits; these bridges are implicated in subunit movement. Contacts the tRNAs in the A and P-sites. This Acinetobacter baylyi (strain ATCC 33305 / BD413 / ADP1) protein is Small ribosomal subunit protein uS13.